Consider the following 1795-residue polypeptide: Type III effector AvrE (1795 aa).

A compositionally biased stretch (polar residues) spans 1 to 18 (MQSPSIHRNTGSIIQPTV). A disordered region spans residues 1–227 (MQSPSIHRNT…PPREPMLWRS (227 aa)). A compositionally biased stretch (low complexity) spans 60 to 75 (KSKAPQQKAATPPTAK). Composition is skewed to polar residues over residues 97–109 (GFSN…THSA) and 117–127 (HPNQASSSGAQ). Residues 129–154 (HEIHPEAAPRKNLRVRFDLPQDRLER) show a composition bias toward basic and acidic residues. A compositionally biased stretch (polar residues) spans 174–191 (ATRQFRSPDSHLQGSDGT). A compositionally biased stretch (low complexity) spans 203 to 215 (PSSSGSKIGDSDG). Short sequence motifs (wxxxE) lie at residues 393 to 397 (WKIPE) and 829 to 833 (WQRFE). The tract at residues 1461 to 1488 (QIGGSHTAPTGTPASAPGPTPASQTAAN) is disordered. The span at 1467–1487 (TAPTGTPASAPGPTPASQTAA) shows a compositional bias: low complexity. An ERMRS motif is present at residues 1787 to 1790 (KKEG).

This sequence belongs to the AvrE family. As to quaternary structure, in planta interaction assays, interacts with the A.thaliana protein phosphatase 2A (PP2A) via direct interaction/association with specific B' regulatory subunits.

It localises to the secreted. Its subcellular location is the host cell. The protein resides in the host cell membrane. With respect to regulation, polyamidoamine dendrimers inhibit channel and virulence activities. Functionally, major virulence factor that may function as a water- and solute-permeable channel dedicated to creating osmotic/water potential perturbation and a water- and nutrient-rich apoplast in which bacteria multiply within the infected plant tissues. Expression in Xenopus oocytes results in inward and outward currents, permeability to water and osmolarity-dependent oocyte swelling and bursting. Elicits cell death in host tomato leaves and in non-host Nicotiana tabacum leaves. Acts within plant cells and promotes lesion formation. The combined action of AvrE and HopM1 is particularly important in promoting bacterial growth in plants. Contributes to the down-regulation of a specific subset of A.thaliana genes during infection, including NHL13, which is required for antibacterial immunity. This is Type III effector AvrE from Pseudomonas syringae pv. tomato (strain ATCC BAA-871 / DC3000).